The chain runs to 259 residues: Acyl-[acyl-carrier-protein]--UDP-N-acetylglucosamine O-acyltransferase (259 aa).

Belongs to the transferase hexapeptide repeat family. LpxA subfamily. As to quaternary structure, homotrimer.

It localises to the cytoplasm. It catalyses the reaction a (3R)-hydroxyacyl-[ACP] + UDP-N-acetyl-alpha-D-glucosamine = a UDP-3-O-[(3R)-3-hydroxyacyl]-N-acetyl-alpha-D-glucosamine + holo-[ACP]. Its pathway is glycolipid biosynthesis; lipid IV(A) biosynthesis; lipid IV(A) from (3R)-3-hydroxytetradecanoyl-[acyl-carrier-protein] and UDP-N-acetyl-alpha-D-glucosamine: step 1/6. Involved in the biosynthesis of lipid A, a phosphorylated glycolipid that anchors the lipopolysaccharide to the outer membrane of the cell. In Psychrobacter arcticus (strain DSM 17307 / VKM B-2377 / 273-4), this protein is Acyl-[acyl-carrier-protein]--UDP-N-acetylglucosamine O-acyltransferase.